We begin with the raw amino-acid sequence, 199 residues long: DnaJ homolog subfamily C member 5B (199 aa).

A phosphoserine mark is found at serine 14 and serine 16. One can recognise a J domain in the interval 19–84 (ALYEILGLHK…SKRNIYDKYG (66 aa)).

Interacts with the chaperone complex consisting of HSC70 and SGTA. In terms of processing, palmitoylated.

The protein localises to the membrane. In Bos taurus (Bovine), this protein is DnaJ homolog subfamily C member 5B (DNAJC5B).